We begin with the raw amino-acid sequence, 181 residues long: UPF0397 protein STER_0346 (181 aa).

Helical transmembrane passes span 11 to 31, 45 to 65, 72 to 92, 109 to 129, and 147 to 167; these read ATGIGAALFIIIGMFVNIPIF, LFSVIFGPITGFFMGFIGHAL, GNISWAWVLASGITGLVIGLF, IWFNLAQALGLLIGYGVVTPI, and FVAGVANFITIAIGGTLLLAI.

This sequence belongs to the UPF0397 family.

It is found in the cell membrane. In Streptococcus thermophilus (strain ATCC BAA-491 / LMD-9), this protein is UPF0397 protein STER_0346.